The following is a 100-amino-acid chain: Coiled-coil domain-containing protein 167 (100 aa).

Positions 14–81 (VASEIDRVEE…VLRGENRRNM (68 aa)) form a coiled coil. Residues 82–99 (MLSVALLAISALFYYTFI) traverse the membrane as a helical segment.

The protein localises to the membrane. In Danio rerio (Zebrafish), this protein is Coiled-coil domain-containing protein 167 (ccdc167).